A 312-amino-acid polypeptide reads, in one-letter code: DNA-directed RNA polymerase subunit alpha (312 aa).

The tract at residues 1–226 (MIEFEKPIIT…EHLNLFTDLT (226 aa)) is alpha N-terminal domain (alpha-NTD). Residues 243–312 (DEKVLDRTIE…DLGLGLKNDK (70 aa)) are alpha C-terminal domain (alpha-CTD).

It belongs to the RNA polymerase alpha chain family. As to quaternary structure, homodimer. The RNAP catalytic core consists of 2 alpha, 1 beta, 1 beta' and 1 omega subunit. When a sigma factor is associated with the core the holoenzyme is formed, which can initiate transcription.

The catalysed reaction is RNA(n) + a ribonucleoside 5'-triphosphate = RNA(n+1) + diphosphate. Functionally, DNA-dependent RNA polymerase catalyzes the transcription of DNA into RNA using the four ribonucleoside triphosphates as substrates. The protein is DNA-directed RNA polymerase subunit alpha of Streptococcus pyogenes serotype M1.